A 338-amino-acid polypeptide reads, in one-letter code: Ketol-acid reductoisomerase (NADP(+)) (338 aa).

The KARI N-terminal Rossmann domain maps to 1 to 181 (MKVYYDKDAD…GGTRGGVIET (181 aa)). NADP(+) contacts are provided by residues 24–27 (YGSQ), Arg-47, and Ser-52. Residue His-107 is part of the active site. Gly-133 is an NADP(+) binding site. One can recognise a KARI C-terminal knotted domain in the interval 182–327 (TFKEETETDL…SRLRDMMPWI (146 aa)). Mg(2+) is bound by residues Asp-190, Glu-194, Glu-226, and Glu-230. Ser-251 contributes to the substrate binding site.

It belongs to the ketol-acid reductoisomerase family. It depends on Mg(2+) as a cofactor.

The catalysed reaction is (2R)-2,3-dihydroxy-3-methylbutanoate + NADP(+) = (2S)-2-acetolactate + NADPH + H(+). It catalyses the reaction (2R,3R)-2,3-dihydroxy-3-methylpentanoate + NADP(+) = (S)-2-ethyl-2-hydroxy-3-oxobutanoate + NADPH + H(+). The protein operates within amino-acid biosynthesis; L-isoleucine biosynthesis; L-isoleucine from 2-oxobutanoate: step 2/4. It functions in the pathway amino-acid biosynthesis; L-valine biosynthesis; L-valine from pyruvate: step 2/4. In terms of biological role, involved in the biosynthesis of branched-chain amino acids (BCAA). Catalyzes an alkyl-migration followed by a ketol-acid reduction of (S)-2-acetolactate (S2AL) to yield (R)-2,3-dihydroxy-isovalerate. In the isomerase reaction, S2AL is rearranged via a Mg-dependent methyl migration to produce 3-hydroxy-3-methyl-2-ketobutyrate (HMKB). In the reductase reaction, this 2-ketoacid undergoes a metal-dependent reduction by NADPH to yield (R)-2,3-dihydroxy-isovalerate. The chain is Ketol-acid reductoisomerase (NADP(+)) from Nitrosomonas eutropha (strain DSM 101675 / C91 / Nm57).